Here is a 303-residue protein sequence, read N- to C-terminus: NAD kinase (303 aa).

Residue D85 is the Proton acceptor of the active site. Residues 85 to 86 (DG), R90, 159 to 160 (ND), K187, D189, A224, and Q259 each bind NAD(+).

Belongs to the NAD kinase family. Requires a divalent metal cation as cofactor.

It localises to the cytoplasm. It carries out the reaction NAD(+) + ATP = ADP + NADP(+) + H(+). Functionally, involved in the regulation of the intracellular balance of NAD and NADP, and is a key enzyme in the biosynthesis of NADP. Catalyzes specifically the phosphorylation on 2'-hydroxyl of the adenosine moiety of NAD to yield NADP. The polypeptide is NAD kinase (Bdellovibrio bacteriovorus (strain ATCC 15356 / DSM 50701 / NCIMB 9529 / HD100)).